Consider the following 140-residue polypeptide: Small ribosomal subunit protein uS12 (140 aa).

Disordered regions lie at residues 36–56 (TYNPSPYKRGVCTRVGTMTPK) and 117–140 (TSGVEKRRQQRSGYGAKRPKEKKE).

It belongs to the universal ribosomal protein uS12 family. Part of the 30S ribosomal subunit. Contacts proteins S8 and S17. May interact with IF1 in the 30S initiation complex.

Functionally, with S4 and S5 plays an important role in translational accuracy. Its function is as follows. Interacts with and stabilizes bases of the 16S rRNA that are involved in tRNA selection in the A site and with the mRNA backbone. Located at the interface of the 30S and 50S subunits, it traverses the body of the 30S subunit contacting proteins on the other side and probably holding the rRNA structure together. The combined cluster of proteins S8, S12 and S17 appears to hold together the shoulder and platform of the 30S subunit. This Malacoplasma penetrans (strain HF-2) (Mycoplasma penetrans) protein is Small ribosomal subunit protein uS12.